The following is a 256-amino-acid chain: Ubiquinone/menaquinone biosynthesis C-methyltransferase UbiE (256 aa).

S-adenosyl-L-methionine is bound by residues Thr79, Asp100, and 128–129 (DA).

The protein belongs to the class I-like SAM-binding methyltransferase superfamily. MenG/UbiE family.

It catalyses the reaction a 2-demethylmenaquinol + S-adenosyl-L-methionine = a menaquinol + S-adenosyl-L-homocysteine + H(+). It carries out the reaction a 2-methoxy-6-(all-trans-polyprenyl)benzene-1,4-diol + S-adenosyl-L-methionine = a 5-methoxy-2-methyl-3-(all-trans-polyprenyl)benzene-1,4-diol + S-adenosyl-L-homocysteine + H(+). It functions in the pathway quinol/quinone metabolism; menaquinone biosynthesis; menaquinol from 1,4-dihydroxy-2-naphthoate: step 2/2. The protein operates within cofactor biosynthesis; ubiquinone biosynthesis. Functionally, methyltransferase required for the conversion of demethylmenaquinol (DMKH2) to menaquinol (MKH2) and the conversion of 2-polyprenyl-6-methoxy-1,4-benzoquinol (DDMQH2) to 2-polyprenyl-3-methyl-6-methoxy-1,4-benzoquinol (DMQH2). The polypeptide is Ubiquinone/menaquinone biosynthesis C-methyltransferase UbiE (Stutzerimonas stutzeri (strain A1501) (Pseudomonas stutzeri)).